The chain runs to 443 residues: F-box/LRR-repeat protein At2g42720 (443 aa).

Positions 1–47 (MDRISSLPDEILEHILSFLSTKEAALTSSLSTRWKNVFVFVPSLHLD) constitute an F-box domain. LRR repeat units lie at residues 139-167 (KLRLGRGFTIKLCHENVYLPMLKTLCLDT), 169-194 (DFDGDHNVFETLLPRCPLLEELVLED), 201-236 (CGSVSSPSLKRLRIRFFHIPIISLDVPGLVYLELSC), 271-296 (SSHLVPADMMDLITGIRKVKVLHLTS), 323-348 (DKKQGWQILPLLIKNSPNLETLVFKG), and 363-389 (CSGILGKSSSCLSSSRVKVLEIWSYQG).

The chain is F-box/LRR-repeat protein At2g42720 from Arabidopsis thaliana (Mouse-ear cress).